The sequence spans 186 residues: Methylamine utilization protein MauE (186 aa).

5 consecutive transmembrane segments (helical) span residues 4–24 (FLIQ…LFVA), 53–73 (VVAL…VVTP), 75–95 (AVPA…ALAI), 127–147 (VLTA…PASL), and 153–173 (GLLA…LGGL).

The protein localises to the cell membrane. The protein operates within one-carbon metabolism; methylamine degradation. Its function is as follows. May be specifically involved in the processing, transport, and/or maturation of the MADH beta-subunit. The chain is Methylamine utilization protein MauE (mauE) from Paracoccus denitrificans.